The chain runs to 116 residues: Large ribosomal subunit protein bL19 (116 aa).

It belongs to the bacterial ribosomal protein bL19 family.

Its function is as follows. This protein is located at the 30S-50S ribosomal subunit interface and may play a role in the structure and function of the aminoacyl-tRNA binding site. This is Large ribosomal subunit protein bL19 from Pseudothermotoga lettingae (strain ATCC BAA-301 / DSM 14385 / NBRC 107922 / TMO) (Thermotoga lettingae).